We begin with the raw amino-acid sequence, 153 residues long: Sperm surface protein Sp17 (153 aa).

Residues 74-117 (FKVPSGATESKEAPPEKSEPEKETPQEVVKEQETQVSFVEEVST) form a disordered region. The segment covering 82–106 (ESKEAPPEKSEPEKETPQEVVKEQE) has biased composition (basic and acidic residues). The IQ domain occupies 122–151 (AAAAAVKIQAAFRGHKARKEVKIMKESSIE).

Homodimer. May interact with ROPN1. Testis- and sperm-specific.

The protein resides in the membrane. In terms of biological role, sperm surface zona pellucida binding protein. Helps to bind spermatozoa to the zona pellucida with high affinity. Might function in binding zona pellucida and carbohydrates. This is Sperm surface protein Sp17 (SPA17) from Notamacropus eugenii (Tammar wallaby).